A 109-amino-acid chain; its full sequence is FK506-binding protein (109 aa).

Residues 20 to 108 (GKEITVHYTG…IFEVELLKVY (89 aa)) enclose the PPIase FKBP-type domain.

It belongs to the FKBP-type PPIase family.

The enzyme catalyses [protein]-peptidylproline (omega=180) = [protein]-peptidylproline (omega=0). Its activity is regulated as follows. Inhibited by FK506. Its function is as follows. PPIases accelerate the folding of proteins. In Neisseria meningitidis serogroup B (strain ATCC BAA-335 / MC58), this protein is FK506-binding protein (fbp).